Here is a 450-residue protein sequence, read N- to C-terminus: Vacuolar cation/proton exchanger 1c (450 aa).

Topologically, residues 1 to 73 are cytoplasmic; the sequence is MAPPESSHHH…LLGGPAAQLQ (73 aa). A disordered region spans residues 28–52; that stretch reads AAEEEEKKEAAAWTPSSSSSMTGRK. The chain crosses the membrane as a helical span at residues 74–94; the sequence is EVLLGTKLYPLFSAVPLAVAA. Residues 95-101 lie on the Extracellular side of the membrane; that stretch reads ESLRLGR. The helical transmembrane segment at 102–122 threads the bilayer; it reads VWVFAFSLIGLAPLAERVSFL. Residues 123–134 are Cytoplasmic-facing; sequence SEHIANTVGPTA. Residues 135–155 traverse the membrane as a helical segment; the sequence is GGIMNATCGNVPELIIALFAL. Residues 143 to 178 form a cation selection region; that stretch reads GNVPELIIALFALHKNKMEILKWSLLGSILSNLLLV. The Extracellular portion of the chain corresponds to 156–170; the sequence is HKNKMEILKWSLLGS. A helical transmembrane segment spans residues 171-191; the sequence is ILSNLLLVLGSSLLFGGIVNI. The Cytoplasmic portion of the chain corresponds to 192–201; that stretch reads GKERPLDKRQ. The chain crosses the membrane as a helical span at residues 202–222; that stretch reads ADVSIGLLLLGVLCHIATLVS. Residues 223-239 lie on the Extracellular side of the membrane; sequence KYTSSTGDSINSSSVMQ. Residues 240 to 260 form a helical membrane-spanning segment; sequence LSRSCAIVMLIAYFGSLMFQL. Residues 261–287 are Cytoplasmic-facing; that stretch reads KTHRQIFELEEDSSDSSSSEDDATDKS. The helical transmembrane segment at 288–308 threads the bilayer; the sequence is VIGFASAMVWLIGMAVVTAML. Over 309–331 the chain is Extracellular; sequence SSYVVTTIEEASESMGIPVRFIS. A helical membrane pass occupies residues 332 to 352; it reads IILLPIVGNAAEHAGAIIFAF. The cation selection stretch occupies residues 339–374; that stretch reads GNAAEHAGAIIFAFKNKIDISLGITLGSATQISMLV. Topologically, residues 353–360 are cytoplasmic; it reads KNKIDISL. Residues 361–381 traverse the membrane as a helical segment; sequence GITLGSATQISMLVVPVILIV. Residues 382-385 are Extracellular-facing; that stretch reads SWVN. A helical membrane pass occupies residues 386–406; sequence AIPMDLDFNLLETGSLAMAVI. Residues 407–424 are Cytoplasmic-facing; the sequence is TTAFTLQDDKWHYLKGLN. A helical transmembrane segment spans residues 425–445; that stretch reads LVFSYIVIAVCFFVMKALPTL. The Extracellular portion of the chain corresponds to 446-450; it reads KKEDD.

This sequence belongs to the Ca(2+):cation antiporter (CaCA) (TC 2.A.19) family. Cation/proton exchanger (CAX) subfamily. In terms of tissue distribution, expressed in leaf blades.

Its subcellular location is the vacuole membrane. Functionally, vacuolar cation/proton exchanger (CAX). Translocates Ca(2+) and other metal ions into vacuoles using the proton gradient formed by H(+)-ATPase and H(+)-pyrophosphatase. The polypeptide is Vacuolar cation/proton exchanger 1c (CAX1c) (Oryza sativa subsp. japonica (Rice)).